A 115-amino-acid polypeptide reads, in one-letter code: uncharacterized protein (115 aa).

This is an uncharacterized protein from Acanthamoeba polyphaga (Amoeba).